A 321-amino-acid polypeptide reads, in one-letter code: uncharacterized protein (321 aa).

10 consecutive transmembrane segments (helical) span residues 6-26 (LFIG…MFPV), 37-57 (FYFS…LLLV), 72-92 (WIIL…FLGQ), 100-120 (IMTA…ILWG), 134-154 (ILIA…SFFF), 160-180 (LFSI…TMGG), 196-216 (CLFG…QGYV), 223-243 (VIAA…IIAL), 255-275 (SING…IMVI), and 277-297 (GYNI…GLIL). EamA domains follow at residues 18–146 (MSWG…MVIT) and 175–300 (VYTM…LNNI).

This sequence belongs to the EamA transporter family.

The protein localises to the cell membrane. This is an uncharacterized protein from Bacillus subtilis (strain 168).